Here is a 185-residue protein sequence, read N- to C-terminus: Lactoylglutathione lyase (185 aa).

A disordered region spans residues 1 to 21 (MAAEPKESPSNNPGLHTTPDE). Residues 27-174 (IMQQTMFRIK…DGYWIEIFDR (148 aa)) enclose the VOC domain. Residues Gln-30 and Arg-34 each coordinate substrate. Residue Gln-30 participates in Zn(2+) binding. Glu-96 serves as a coordination point for Zn(2+). Residues Asn-100, Arg-120, His-124, and 154–155 (KM) each bind substrate. His-124 serves as a coordination point for Zn(2+). Residue Glu-170 coordinates Zn(2+). The active-site Proton donor/acceptor is the Glu-170.

Belongs to the glyoxalase I family. Homodimer. Zn(2+) is required as a cofactor.

The enzyme catalyses (R)-S-lactoylglutathione = methylglyoxal + glutathione. Its pathway is secondary metabolite metabolism; methylglyoxal degradation; (R)-lactate from methylglyoxal: step 1/2. In terms of biological role, catalyzes the conversion of hemimercaptal, formed from methylglyoxal and glutathione, to S-lactoylglutathione. Active toward the hemithioacetal adducts formed by reacting methylglyoxal or phenylglyoxal with glutathione, homoglutathione or gamma-glutamylcysteine, showing no preference for homoglutathione adducts over glutathione adducts. The protein is Lactoylglutathione lyase (GLXI) of Glycine max (Soybean).